The following is a 390-amino-acid chain: Homoserine O-succinyltransferase (390 aa).

One can recognise an AB hydrolase-1 domain in the interval Asn59–Asp369. Ser165 acts as the Nucleophile in catalysis. Arg235 provides a ligand contact to substrate. Catalysis depends on residues Asp330 and His363. Asp364 contacts substrate.

This sequence belongs to the AB hydrolase superfamily. MetX family. Homodimer.

Its subcellular location is the cytoplasm. The enzyme catalyses L-homoserine + succinyl-CoA = O-succinyl-L-homoserine + CoA. It participates in amino-acid biosynthesis; L-methionine biosynthesis via de novo pathway; O-succinyl-L-homoserine from L-homoserine: step 1/1. Transfers a succinyl group from succinyl-CoA to L-homoserine, forming succinyl-L-homoserine. This is Homoserine O-succinyltransferase from Cupriavidus pinatubonensis (strain JMP 134 / LMG 1197) (Cupriavidus necator (strain JMP 134)).